Consider the following 122-residue polypeptide: MIQMQTILNVADNSGAKEVMCIKVLGGTHHMIAHLGDVIVVSIKSSIPKGKVKKGEVCKALIIRTKCGVTRHDGSNIKFDSNDVVLLNKQGEPFGTRIFGSVPRELRVKNFSKIVSLAEEVL.

This sequence belongs to the universal ribosomal protein uL14 family. Part of the 50S ribosomal subunit. Forms a cluster with proteins L3 and L19. In the 70S ribosome, L14 and L19 interact and together make contacts with the 16S rRNA in bridges B5 and B8.

Functionally, binds to 23S rRNA. Forms part of two intersubunit bridges in the 70S ribosome. This chain is Large ribosomal subunit protein uL14, found in Orientia tsutsugamushi (strain Ikeda) (Rickettsia tsutsugamushi).